The primary structure comprises 189 residues: Chitin synthase 3 (189 aa).

It belongs to the chitin synthase family. Class II subfamily.

It is found in the cell membrane. It catalyses the reaction [(1-&gt;4)-N-acetyl-beta-D-glucosaminyl](n) + UDP-N-acetyl-alpha-D-glucosamine = [(1-&gt;4)-N-acetyl-beta-D-glucosaminyl](n+1) + UDP + H(+). Its function is as follows. Polymerizes chitin, a structural polymer of the cell wall and septum, by transferring the sugar moiety of UDP-GlcNAc to the non-reducing end of the growing chitin polymer. The polypeptide is Chitin synthase 3 (CHS3) (Ajellomyces capsulatus (Darling's disease fungus)).